Here is a 507-residue protein sequence, read N- to C-terminus: Cytochrome P450 monooxygenase cloA (507 aa).

A helical membrane pass occupies residues 15–35 (WTWILLTTCIALISPLVLKGI). N-linked (GlcNAc...) asparagine glycosylation occurs at Asn247. Cys450 lines the heme pocket.

This sequence belongs to the cytochrome P450 family. It depends on heme as a cofactor.

It is found in the membrane. Its pathway is alkaloid biosynthesis; ergot alkaloid biosynthesis. Functionally, cytochrome P450 monooxygenase; part of the gene cluster that mediates the biosynthesis of fungal ergot alkaloid. DmaW catalyzes the first step of ergot alkaloid biosynthesis by condensing dimethylallyl diphosphate (DMAP) and tryptophan to form 4-dimethylallyl-L-tryptophan. The second step is catalyzed by the methyltransferase easF that methylates 4-dimethylallyl-L-tryptophan in the presence of S-adenosyl-L-methionine, resulting in the formation of 4-dimethylallyl-L-abrine. The catalase easC and the FAD-dependent oxidoreductase easE then transform 4-dimethylallyl-L-abrine to chanoclavine-I which is further oxidized by easD in the presence of NAD(+), resulting in the formation of chanoclavine-I aldehyde. Agroclavine dehydrogenase easG then mediates the conversion of chanoclavine-I aldehyde to agroclavine via a non-enzymatic adduct reaction: the substrate is an iminium intermediate that is formed spontaneously from chanoclavine-I aldehyde in the presence of glutathione. The presence of easA is not required to complete this reaction. Further conversion of agroclavine to paspalic acid is a two-step process involving oxidation of agroclavine to elymoclavine and of elymoclavine to paspalic acid, the second step being performed by the elymoclavine oxidase cloA. Paspalic acid is then further converted to D-lysergic acid. Ergopeptines are assembled from D-lysergic acid and three different amino acids by the D-lysergyl-peptide-synthetases composed each of a monomudular and a trimodular nonribosomal peptide synthetase subunit. LpsB and lpsC encode the monomodular subunits responsible for D-lysergic acid activation and incorporation into the ergopeptine backbone. LpsA1 and A2 subunits encode the trimodular nonribosomal peptide synthetase assembling the tripeptide portion of ergopeptines. LpsA1 is responsible for formation of the major ergopeptine, ergotamine, and lpsA2 for alpha-ergocryptine, the minor ergopeptine of the total alkaloid mixture elaborated by C.purpurea. D-lysergyl-tripeptides are assembled by the nonribosomal peptide synthetases and released as N-(D-lysergyl-aminoacyl)-lactams. Cyclolization of the D-lysergyl-tripeptides is performed by the Fe(2+)/2-ketoglutarate-dependent dioxygenase easH which introduces a hydroxyl group into N-(D-lysergyl-aminoacyl)-lactam at alpha-C of the aminoacyl residue followed by spontaneous condensation with the terminal lactam carbonyl group. In Claviceps purpurea (strain 20.1) (Ergot fungus), this protein is Cytochrome P450 monooxygenase cloA.